The sequence spans 273 residues: Epithelial sodium channel subunit beta (273 aa).

The Extracellular segment spans residues 1-245; the sequence is NCYIFNWGQE…RSISESPTTN (245 aa). Intrachain disulfides connect Cys92/Cys179, Cys117/Cys175, Cys121/Cys171, Cys130/Cys157, and Cys132/Cys146. The helical transmembrane segment at 246–273 threads the bilayer; sequence VVWLLSNLGGQFGFWMGGSVLCIIEFGE.

Belongs to the amiloride-sensitive sodium channel (TC 1.A.6) family. SCNN1B subfamily. As to quaternary structure, component of the heterotrimeric epithelial sodium channel (ENaC) composed of an alpha/SCNN1A, a beta/SCNN1B and a gamma/SCNN1G subunit.

The protein resides in the apical cell membrane. It localises to the cytoplasmic vesicle membrane. The enzyme catalyses Na(+)(in) = Na(+)(out). Its activity is regulated as follows. Originally identified and characterized by its inhibition by the diuretic drug amiloride. In terms of biological role, this is one of the three pore-forming subunits of the heterotrimeric epithelial sodium channel (ENaC), a critical regulator of sodium balance and fluid homeostasis. ENaC operates in epithelial tissues, where it mediates the electrodiffusion of sodium ions from extracellular fluid through the apical membrane of cells, with water following osmotically. It plays a key role in maintaining sodium homeostasis through electrogenic sodium reabsorption in the kidneys. Additionally, ENaC is essential for airway surface liquid homeostasis, which is crucial for proper mucus clearance. This chain is Epithelial sodium channel subunit beta, found in Aquarana catesbeiana (American bullfrog).